We begin with the raw amino-acid sequence, 476 residues long: 3-isopropylmalate dehydratase large subunit (476 aa).

C357, C417, and C420 together coordinate [4Fe-4S] cluster.

Belongs to the aconitase/IPM isomerase family. LeuC type 1 subfamily. Heterodimer of LeuC and LeuD. The cofactor is [4Fe-4S] cluster.

It catalyses the reaction (2R,3S)-3-isopropylmalate = (2S)-2-isopropylmalate. The protein operates within amino-acid biosynthesis; L-leucine biosynthesis; L-leucine from 3-methyl-2-oxobutanoate: step 2/4. Functionally, catalyzes the isomerization between 2-isopropylmalate and 3-isopropylmalate, via the formation of 2-isopropylmaleate. The protein is 3-isopropylmalate dehydratase large subunit of Mycolicibacterium paratuberculosis (strain ATCC BAA-968 / K-10) (Mycobacterium paratuberculosis).